The primary structure comprises 316 residues: UDP-N-acetylenolpyruvoylglucosamine reductase (316 aa).

The FAD-binding PCMH-type domain occupies 27 to 225 (VGGKAERFYR…KTAINALLKK (199 aa)). Arg190 is an active-site residue. Catalysis depends on Ser239, which acts as the Proton donor. Residue Glu309 is part of the active site.

The protein belongs to the MurB family. Requires FAD as cofactor.

The protein localises to the cytoplasm. The enzyme catalyses UDP-N-acetyl-alpha-D-muramate + NADP(+) = UDP-N-acetyl-3-O-(1-carboxyvinyl)-alpha-D-glucosamine + NADPH + H(+). It participates in cell wall biogenesis; peptidoglycan biosynthesis. Functionally, cell wall formation. The protein is UDP-N-acetylenolpyruvoylglucosamine reductase of Coxiella burnetii (strain CbuK_Q154) (Coxiella burnetii (strain Q154)).